The primary structure comprises 579 residues: Zinc finger-containing ubiquitin peptidase 1 (579 aa).

The C2H2-type 1 zinc-finger motif lies at Leu2 to His25. A C2H2-type 2; atypical zinc finger spans residues Val30–His53. 2 consecutive C2H2-type zinc fingers follow at residues Pro155–His178 and Tyr194–His216. Residues Asn227–Arg249 form an MIU region. Positions Arg250–Gly275 are zUBD/ZHA. Lys263 is modified (N6-acetyllysine). The active-site Nucleophile is Cys361. His492 (proton acceptor) is an active-site residue. The active site involves Asp513.

It belongs to the peptidase C78 family. ZUFSP subfamily. As to quaternary structure, interacts with RPA1 and RPA2.

It localises to the cytoplasm. It is found in the nucleus. It carries out the reaction Thiol-dependent hydrolysis of ester, thioester, amide, peptide and isopeptide bonds formed by the C-terminal Gly of ubiquitin (a 76-residue protein attached to proteins as an intracellular targeting signal).. Functionally, deubiquitinase with endodeubiquitinase activity that specifically interacts with and cleaves 'Lys-63'-linked long polyubiquitin chains. Shows only weak activity against 'Lys-11' and 'Lys-48'-linked chains. Plays an important role in genome stability pathways, functioning to prevent spontaneous DNA damage and also promote cellular survival in response to exogenous DNA damage. Modulates the ubiquitination status of replication protein A (RPA) complex proteins in response to replication stress. The sequence is that of Zinc finger-containing ubiquitin peptidase 1 from Bos taurus (Bovine).